The chain runs to 121 residues: Large ribosomal subunit protein uL14 (121 aa).

Belongs to the universal ribosomal protein uL14 family. Part of the 50S ribosomal subunit. Forms a cluster with proteins L3 and L19. In the 70S ribosome, L14 and L19 interact and together make contacts with the 16S rRNA in bridges B5 and B8.

In terms of biological role, binds to 23S rRNA. Forms part of two intersubunit bridges in the 70S ribosome. The chain is Large ribosomal subunit protein uL14 from Azobacteroides pseudotrichonymphae genomovar. CFP2.